Consider the following 497-residue polypeptide: NADH-quinone oxidoreductase subunit N (497 aa).

14 helical membrane passes run 14-34 (LMAM…MLSI), 45-65 (SLTV…WGLF), 86-106 (IFYS…AYPW), 116-136 (EFYL…SAQH), 137-157 (LAAV…LLGY), 171-191 (YFVL…MLYA), 215-235 (ILAG…LVPF), 253-273 (FLGT…FLYV), 281-301 (LNTA…LMAL), 309-329 (LLGY…IALH), 338-358 (VAVY…VVSL), 385-405 (AAVM…LGFI), 420-439 (WVLT…YYLR), and 461-481 (AFTA…VFGI).

Belongs to the complex I subunit 2 family. As to quaternary structure, NDH-1 is composed of 13 different subunits. Subunits NuoA, H, J, K, L, M, N constitute the membrane sector of the complex.

Its subcellular location is the cell membrane. It carries out the reaction a quinone + NADH + 5 H(+)(in) = a quinol + NAD(+) + 4 H(+)(out). NDH-1 shuttles electrons from NADH, via FMN and iron-sulfur (Fe-S) centers, to quinones in the respiratory chain. The immediate electron acceptor for the enzyme in this species is believed to be ubiquinone. Couples the redox reaction to proton translocation (for every two electrons transferred, four hydrogen ions are translocated across the cytoplasmic membrane), and thus conserves the redox energy in a proton gradient. This Hamiltonella defensa subsp. Acyrthosiphon pisum (strain 5AT) protein is NADH-quinone oxidoreductase subunit N.